Consider the following 208-residue polypeptide: Uracil phosphoribosyltransferase (208 aa).

Residues Arg-78, Arg-103, and 130 to 138 each bind 5-phospho-alpha-D-ribose 1-diphosphate; that span reads DPMLATGGS. Residues Ile-193 and 198–200 each bind uracil; that span reads GDA. Asp-199 contacts 5-phospho-alpha-D-ribose 1-diphosphate.

This sequence belongs to the UPRTase family. It depends on Mg(2+) as a cofactor.

It carries out the reaction UMP + diphosphate = 5-phospho-alpha-D-ribose 1-diphosphate + uracil. It participates in pyrimidine metabolism; UMP biosynthesis via salvage pathway; UMP from uracil: step 1/1. With respect to regulation, allosterically activated by GTP. Its function is as follows. Catalyzes the conversion of uracil and 5-phospho-alpha-D-ribose 1-diphosphate (PRPP) to UMP and diphosphate. In Aliivibrio fischeri (strain MJ11) (Vibrio fischeri), this protein is Uracil phosphoribosyltransferase.